The chain runs to 476 residues: ATP synthase subunit beta (476 aa).

162-169 (GGAGVGKT) is an ATP binding site.

Belongs to the ATPase alpha/beta chains family. F-type ATPases have 2 components, CF(1) - the catalytic core - and CF(0) - the membrane proton channel. CF(1) has five subunits: alpha(3), beta(3), gamma(1), delta(1), epsilon(1). CF(0) has three main subunits: a(1), b(2) and c(9-12). The alpha and beta chains form an alternating ring which encloses part of the gamma chain. CF(1) is attached to CF(0) by a central stalk formed by the gamma and epsilon chains, while a peripheral stalk is formed by the delta and b chains.

The protein localises to the cell membrane. It carries out the reaction ATP + H2O + 4 H(+)(in) = ADP + phosphate + 5 H(+)(out). Its function is as follows. Produces ATP from ADP in the presence of a proton gradient across the membrane. The catalytic sites are hosted primarily by the beta subunits. The sequence is that of ATP synthase subunit beta from Mycoplasma capricolum subsp. capricolum (strain California kid / ATCC 27343 / NCTC 10154).